A 236-amino-acid polypeptide reads, in one-letter code: 4-hydroxy-tetrahydrodipicolinate reductase (236 aa).

NAD(+) contacts are provided by residues 11–16 (GASGRM), 92–94 (GTT), and 116–119 (GSNF). Histidine 148 serves as the catalytic Proton donor/acceptor. Histidine 149 is a binding site for (S)-2,3,4,5-tetrahydrodipicolinate. The Proton donor role is filled by lysine 152. 158–159 (GS) lines the (S)-2,3,4,5-tetrahydrodipicolinate pocket.

Belongs to the DapB family.

The protein localises to the cytoplasm. The enzyme catalyses (S)-2,3,4,5-tetrahydrodipicolinate + NAD(+) + H2O = (2S,4S)-4-hydroxy-2,3,4,5-tetrahydrodipicolinate + NADH + H(+). It carries out the reaction (S)-2,3,4,5-tetrahydrodipicolinate + NADP(+) + H2O = (2S,4S)-4-hydroxy-2,3,4,5-tetrahydrodipicolinate + NADPH + H(+). Its pathway is amino-acid biosynthesis; L-lysine biosynthesis via DAP pathway; (S)-tetrahydrodipicolinate from L-aspartate: step 4/4. Functionally, catalyzes the conversion of 4-hydroxy-tetrahydrodipicolinate (HTPA) to tetrahydrodipicolinate. The protein is 4-hydroxy-tetrahydrodipicolinate reductase of Xylella fastidiosa (strain M23).